Reading from the N-terminus, the 384-residue chain is NADH-quinone oxidoreductase subunit D 2 (384 aa).

The protein belongs to the complex I 49 kDa subunit family. As to quaternary structure, NDH-1 is composed of 14 different subunits. Subunits NuoB, C, D, E, F, and G constitute the peripheral sector of the complex.

The protein resides in the cell membrane. The catalysed reaction is a quinone + NADH + 5 H(+)(in) = a quinol + NAD(+) + 4 H(+)(out). In terms of biological role, NDH-1 shuttles electrons from NADH, via FMN and iron-sulfur (Fe-S) centers, to quinones in the respiratory chain. The immediate electron acceptor for the enzyme in this species is believed to be a menaquinone. Couples the redox reaction to proton translocation (for every two electrons transferred, four hydrogen ions are translocated across the cytoplasmic membrane), and thus conserves the redox energy in a proton gradient. This is NADH-quinone oxidoreductase subunit D 2 from Symbiobacterium thermophilum (strain DSM 24528 / JCM 14929 / IAM 14863 / T).